We begin with the raw amino-acid sequence, 336 residues long: Fructose-1,6-bisphosphatase class 1 (336 aa).

Mg(2+) contacts are provided by glutamate 92, aspartate 115, leucine 117, and aspartate 118. Residues 118 to 121 (DGSS), asparagine 211, tyrosine 244, 262 to 264 (YLY), and lysine 274 contribute to the substrate site. Residue glutamate 280 participates in Mg(2+) binding.

It belongs to the FBPase class 1 family. As to quaternary structure, homotetramer. Mg(2+) serves as cofactor.

The protein resides in the cytoplasm. It carries out the reaction beta-D-fructose 1,6-bisphosphate + H2O = beta-D-fructose 6-phosphate + phosphate. It participates in carbohydrate biosynthesis; gluconeogenesis. This is Fructose-1,6-bisphosphatase class 1 from Vibrio atlanticus (strain LGP32) (Vibrio splendidus (strain Mel32)).